The primary structure comprises 227 residues: Guanylate kinase (227 aa).

Residues 21–199 (GNLFMVVAPS…ALAELECIVA (179 aa)) form the Guanylate kinase-like domain. 28–35 (APSGAGKS) lines the ATP pocket.

This sequence belongs to the guanylate kinase family.

It localises to the cytoplasm. The catalysed reaction is GMP + ATP = GDP + ADP. Functionally, essential for recycling GMP and indirectly, cGMP. The chain is Guanylate kinase from Burkholderia lata (strain ATCC 17760 / DSM 23089 / LMG 22485 / NCIMB 9086 / R18194 / 383).